Consider the following 707-residue polypeptide: Tubulin polyglutamylase ttll-11 (707 aa).

Residues 124-488 (RFTIDTSRAK…PLVRDTLLLV (365 aa)) enclose the TTL domain. ATP-binding positions include 279–282 (QEYV), K293, and D295. A disordered region spans residues 675 to 707 (RNRSGTNGRKQNFTDDNNNPNSFAHLPKINERL). Positions 677 to 696 (RSGTNGRKQNFTDDNNNPNS) are enriched in polar residues.

The protein belongs to the tubulin--tyrosine ligase family. As to expression, expressed in amphid sensory neurons. Weakly expressed in body wall muscles. Isoform a: Specifically expressed in ciliated sensory neurons in the head, including the IL1s, OLQ, head CEP, and amphid neurons. In the male tail, expressed in HOA, RnA, and phasmid neurons. Isoform b: Specifically expressed in male and hermaphrodite IL2 ciliated sensory neurons, and in male-specific CEM, HOB and RnB ciliated sensory neurons.

It is found in the cell projection. It localises to the axon. The protein localises to the perikaryon. Its subcellular location is the dendrite. The protein resides in the cilium. It is found in the extracellular vesicle. It catalyses the reaction L-glutamyl-[protein] + L-glutamate + ATP = gamma-L-glutamyl-L-glutamyl-[protein] + ADP + phosphate + H(+). Polyglutamylase which preferentially modifies tubulin. Involved in the side-chain initiation step of the polyglutamylation reaction. By controlling tubulin glutamylation, regulates ciliary specialization and motor-based transport. Promotes the formation of A and B tubule singlets by splaying microtubule doublets in cilia. Together with ttll-4 and 5, required for male mating. Functionally, specifically promotes tubulin glutamylation in a subset of ciliated neurons including amphid, phasmid, CEP and RnA neurons. Its function is as follows. Specifically promotes tubulin glutamylation in male ciliated CEM, HOB and RnB neurons that release bioactive extracellular vesicles. Regulates the localization of TRP channel pdk-2 in male CEM, HOB and RnB neurons. Regulates the environmental release of bioactive extracellular vesicles in cilia. This Caenorhabditis elegans protein is Tubulin polyglutamylase ttll-11.